A 125-amino-acid chain; its full sequence is Large ribosomal subunit protein bL19 (125 aa).

This sequence belongs to the bacterial ribosomal protein bL19 family.

Functionally, this protein is located at the 30S-50S ribosomal subunit interface and may play a role in the structure and function of the aminoacyl-tRNA binding site. The protein is Large ribosomal subunit protein bL19 of Ehrlichia ruminantium (strain Welgevonden).